A 117-amino-acid polypeptide reads, in one-letter code: Non-specific lipid-transfer protein Lac s 1 (117 aa).

An N-terminal signal peptide occupies residues 1–25 (MARMAMMILCVVLTCMVVATPYTEA). 4 disulfides stabilise this stretch: cysteine 29–cysteine 76, cysteine 39–cysteine 53, cysteine 54–cysteine 99, and cysteine 74–cysteine 113.

It belongs to the plant LTP family.

Plant non-specific lipid-transfer proteins transfer phospholipids as well as galactolipids across membranes. May play a role in wax or cutin deposition in the cell walls of expanding epidermal cells and certain secretory tissues. This chain is Non-specific lipid-transfer protein Lac s 1, found in Lactuca sativa (Garden lettuce).